Here is a 173-residue protein sequence, read N- to C-terminus: Glutamyl-tRNA(Gln) amidotransferase subunit C-1, mitochondrial (173 aa).

The transit peptide at 1–23 (MIRIPFRLRPPPGRTLHSLVRTF) directs the protein to the mitochondrion. The segment at 51–70 (PSKVPQRPHKSTTTVGQSTP) is disordered. The span at 61 to 70 (STTTVGQSTP) shows a compositional bias: polar residues.

Belongs to the GatC family. Subunit of the heterotrimeric GatCAB amidotransferase (AdT) complex, composed of A, B and C subunits.

Its subcellular location is the mitochondrion. The catalysed reaction is L-glutamyl-tRNA(Gln) + L-glutamine + ATP + H2O = L-glutaminyl-tRNA(Gln) + L-glutamate + ADP + phosphate + H(+). Allows the formation of correctly charged Gln-tRNA(Gln) through the transamidation of misacylated Glu-tRNA(Gln) in the mitochondria. The reaction takes place in the presence of glutamine and ATP through an activated gamma-phospho-Glu-tRNA(Gln). The polypeptide is Glutamyl-tRNA(Gln) amidotransferase subunit C-1, mitochondrial (Culex quinquefasciatus (Southern house mosquito)).